We begin with the raw amino-acid sequence, 99 residues long: Integration host factor subunit alpha (99 aa).

Belongs to the bacterial histone-like protein family. Heterodimer of an alpha and a beta chain.

In terms of biological role, this protein is one of the two subunits of integration host factor, a specific DNA-binding protein that functions in genetic recombination as well as in transcriptional and translational control. The protein is Integration host factor subunit alpha of Pseudoalteromonas translucida (strain TAC 125).